The primary structure comprises 88 residues: Small ribosomal subunit protein uS17 (88 aa).

It belongs to the universal ribosomal protein uS17 family. Part of the 30S ribosomal subunit.

Functionally, one of the primary rRNA binding proteins, it binds specifically to the 5'-end of 16S ribosomal RNA. The polypeptide is Small ribosomal subunit protein uS17 (Pseudomonas aeruginosa (strain LESB58)).